A 184-amino-acid chain; its full sequence is uncharacterized protein (184 aa).

This is an uncharacterized protein from Chlamydia pneumoniae (Chlamydophila pneumoniae).